The primary structure comprises 251 residues: Segregation and condensation protein A (251 aa).

It belongs to the ScpA family. As to quaternary structure, component of a cohesin-like complex composed of ScpA, ScpB and the Smc homodimer, in which ScpA and ScpB bind to the head domain of Smc. The presence of the three proteins is required for the association of the complex with DNA.

It localises to the cytoplasm. Its function is as follows. Participates in chromosomal partition during cell division. May act via the formation of a condensin-like complex containing Smc and ScpB that pull DNA away from mid-cell into both cell halves. This is Segregation and condensation protein A from Bacillus licheniformis (strain ATCC 14580 / DSM 13 / JCM 2505 / CCUG 7422 / NBRC 12200 / NCIMB 9375 / NCTC 10341 / NRRL NRS-1264 / Gibson 46).